The chain runs to 617 residues: Dopamine beta-hydroxylase (617 aa).

Residues 1-16 (MPALSRWASLPGPSMR) lie on the Cytoplasmic side of the membrane. The chain crosses the membrane as a helical; Signal-anchor for type II membrane protein span at residues 17–37 (EAAFMYSTAVAIFLVILVAAL). Residues 38–617 (QGSAPRESPL…TVVSIGGGKG (580 aa)) are Intragranular-facing. The DOMON domain maps to 57 to 173 (GSLELSWNVS…GTVHLVYGIL (117 aa)). Residue Asn-64 is glycosylated (N-linked (GlcNAc...) asparagine). 6 disulfides stabilise this stretch: Cys-154/Cys-596, Cys-232/Cys-283, Cys-269/Cys-295, Cys-390/Cys-503, Cys-394/Cys-565, and Cys-466/Cys-488. N-linked (GlcNAc...) (complex) asparagine glycosylation is present at Asn-184. The active site involves Tyr-230. The Cu(2+) site is built by His-262 and His-263. His-333 lines the Cu(2+) pocket. Asn-344 carries an N-linked (GlcNAc...) asparagine glycan. His-412 is an active-site residue. Residues His-412, His-414, and Met-487 each contribute to the Cu(2+) site. Residue Asn-566 is glycosylated (N-linked (GlcNAc...) asparagine). Residues 590–617 (EEPTPQCPTSQGRSPAGPTVVSIGGGKG) form a disordered region.

It belongs to the copper type II ascorbate-dependent monooxygenase family. In terms of assembly, homotetramer; composed of two disulfide-linked dimers. Cu(2+) serves as cofactor. In terms of processing, N-glycosylated. Proteolytic cleavage after the membrane-anchor leads to the release of the soluble form.

The protein localises to the cytoplasmic vesicle. It is found in the secretory vesicle lumen. It localises to the secretory vesicle. The protein resides in the chromaffin granule lumen. Its subcellular location is the secreted. The protein localises to the secretory vesicle membrane. It is found in the chromaffin granule membrane. The enzyme catalyses dopamine + 2 L-ascorbate + O2 = (R)-noradrenaline + 2 monodehydro-L-ascorbate radical + H2O. It participates in catecholamine biosynthesis; (R)-noradrenaline biosynthesis; (R)-noradrenaline from dopamine: step 1/1. Catalyzes the hydroxylation of dopamine to noradrenaline (also known as norepinephrine), and is thus vital for regulation of these neurotransmitters. This chain is Dopamine beta-hydroxylase (DBH), found in Homo sapiens (Human).